A 60-amino-acid chain; its full sequence is Large ribosomal subunit protein uL30 (60 aa).

This sequence belongs to the universal ribosomal protein uL30 family. Part of the 50S ribosomal subunit.

The protein is Large ribosomal subunit protein uL30 of Pediococcus pentosaceus (strain ATCC 25745 / CCUG 21536 / LMG 10740 / 183-1w).